Consider the following 345-residue polypeptide: Protein RecA (345 aa).

66–73 is a binding site for ATP; that stretch reads GPESSGKT.

It belongs to the RecA family.

Its subcellular location is the cytoplasm. Can catalyze the hydrolysis of ATP in the presence of single-stranded DNA, the ATP-dependent uptake of single-stranded DNA by duplex DNA, and the ATP-dependent hybridization of homologous single-stranded DNAs. It interacts with LexA causing its activation and leading to its autocatalytic cleavage. The chain is Protein RecA from Frankia casuarinae (strain DSM 45818 / CECT 9043 / HFP020203 / CcI3).